A 456-amino-acid polypeptide reads, in one-letter code: MYGNIEKIHFVGIGGIGMSGIAEVLLNLGYQVSGSDLRESDTTERLRSLGGEICIGHAAENLTNVDVVVTSTAVQSDNPEVIEAKHRMVPVIPRAEMLAELMRMKYGIAIAGTHGKTTTTSMVATVLTHAGIDPTIVIGGKLNTLGSNAKLGQGKFLVAEADESDGSFLTLSPTIAVVTNIDADHLDYYTGGLEQIKDTFVSFINKVPFYGLAVLCQEDRNINEIIPRIKKRFMTYGLSSQADLRATHVKLDGFQTTFTAHYKGYRLGEISFNMPGAHNVLNALACTAVALELDVPFDKIQEGFAQFGGVGRRFTVKGEKNGIMVVDDYGHHPAEIRATLGAARNGWPERRLVVAFQPHRYSRTKELFNEFVTCFYDADVLVLTDIYAASEQPIPGVSAERLAEETRRHGQRDVTYIADRNDLPDYLAGIVKEGDIVITLGAGNIWQAGEALVKRL.

112-118 contacts ATP; the sequence is GTHGKTT.

Belongs to the MurCDEF family.

The protein resides in the cytoplasm. The enzyme catalyses UDP-N-acetyl-alpha-D-muramate + L-alanine + ATP = UDP-N-acetyl-alpha-D-muramoyl-L-alanine + ADP + phosphate + H(+). It participates in cell wall biogenesis; peptidoglycan biosynthesis. Cell wall formation. This is UDP-N-acetylmuramate--L-alanine ligase from Trichlorobacter lovleyi (strain ATCC BAA-1151 / DSM 17278 / SZ) (Geobacter lovleyi).